Reading from the N-terminus, the 298-residue chain is NADH-cytochrome b5 reductase 2 (298 aa).

Residues 13-33 (FLPFAIGAVAVTAGALYLNGW) form a helical membrane-spanning segment. An FAD-binding FR-type domain is found at 48–152 (RKWIDLELEK…QGPIPKWQWK (105 aa)). An FAD-binding site is contributed by 155–190 (SFDTITLLGGGTGITPLYQLVHHITQNKEDKTKINL).

The protein belongs to the flavoprotein pyridine nucleotide cytochrome reductase family. FAD is required as a cofactor.

It is found in the mitochondrion outer membrane. The catalysed reaction is 2 Fe(III)-[cytochrome b5] + NADH = 2 Fe(II)-[cytochrome b5] + NAD(+) + H(+). Functionally, may mediate the reduction of outer membrane cytochrome b5. In Candida glabrata (strain ATCC 2001 / BCRC 20586 / JCM 3761 / NBRC 0622 / NRRL Y-65 / CBS 138) (Yeast), this protein is NADH-cytochrome b5 reductase 2 (MCR1).